The following is a 233-amino-acid chain: Large ribosomal subunit protein uL22m (233 aa).

The protein belongs to the universal ribosomal protein uL22 family. Component of the mitochondrial ribosome large subunit (39S) which comprises a 16S rRNA and about 50 distinct proteins.

It is found in the mitochondrion. The polypeptide is Large ribosomal subunit protein uL22m (mRpL22) (Drosophila pseudoobscura pseudoobscura (Fruit fly)).